The sequence spans 72 residues: Translation initiation factor IF-1 (72 aa).

An S1-like domain is found at 1–72 (MAKEDNIEMQ…SKGRIVFRAR (72 aa)).

Belongs to the IF-1 family. Component of the 30S ribosomal translation pre-initiation complex which assembles on the 30S ribosome in the order IF-2 and IF-3, IF-1 and N-formylmethionyl-tRNA(fMet); mRNA recruitment can occur at any time during PIC assembly.

The protein localises to the cytoplasm. In terms of biological role, one of the essential components for the initiation of protein synthesis. Stabilizes the binding of IF-2 and IF-3 on the 30S subunit to which N-formylmethionyl-tRNA(fMet) subsequently binds. Helps modulate mRNA selection, yielding the 30S pre-initiation complex (PIC). Upon addition of the 50S ribosomal subunit IF-1, IF-2 and IF-3 are released leaving the mature 70S translation initiation complex. This Shewanella frigidimarina (strain NCIMB 400) protein is Translation initiation factor IF-1.